The chain runs to 366 residues: Carbamoyl phosphate synthase small chain (366 aa).

Residues 1–171 (MLEKRYLVLE…KTPYVSTGSD (171 aa)) are CPSase. L-glutamine is bound by residues S47, G221, and G223. The 188-residue stretch at 173–360 (SVVLLDFGKK…IAMMKDFKEK (188 aa)) folds into the Glutamine amidotransferase type-1 domain. Catalysis depends on C248, which acts as the Nucleophile. L-glutamine is bound by residues L249, Q252, N290, G292, and Y293. Active-site residues include H333 and E335.

The protein belongs to the CarA family. As to quaternary structure, composed of two chains; the small (or glutamine) chain promotes the hydrolysis of glutamine to ammonia, which is used by the large (or ammonia) chain to synthesize carbamoyl phosphate. Tetramer of heterodimers (alpha,beta)4.

The catalysed reaction is hydrogencarbonate + L-glutamine + 2 ATP + H2O = carbamoyl phosphate + L-glutamate + 2 ADP + phosphate + 2 H(+). It catalyses the reaction L-glutamine + H2O = L-glutamate + NH4(+). The protein operates within amino-acid biosynthesis; L-arginine biosynthesis; carbamoyl phosphate from bicarbonate: step 1/1. It functions in the pathway pyrimidine metabolism; UMP biosynthesis via de novo pathway; (S)-dihydroorotate from bicarbonate: step 1/3. Small subunit of the glutamine-dependent carbamoyl phosphate synthetase (CPSase). CPSase catalyzes the formation of carbamoyl phosphate from the ammonia moiety of glutamine, carbonate, and phosphate donated by ATP, constituting the first step of 2 biosynthetic pathways, one leading to arginine and/or urea and the other to pyrimidine nucleotides. The small subunit (glutamine amidotransferase) binds and cleaves glutamine to supply the large subunit with the substrate ammonia. The sequence is that of Carbamoyl phosphate synthase small chain from Staphylococcus epidermidis (strain ATCC 12228 / FDA PCI 1200).